We begin with the raw amino-acid sequence, 304 residues long: Foldase protein PrsA (304 aa).

Residues 1 to 19 form the signal peptide; sequence MKKKLLSVAAVASVFTLAA. C20 is lipidated: N-palmitoyl cysteine. A lipid anchor (S-diacylglycerol cysteine) is attached at C20. Positions 140 to 231 constitute a PpiC domain; the sequence is KVEVKASHIL…FGYHIIKVTD (92 aa). The tract at residues 285 to 304 is disordered; that stretch reads FDLDKQEQQQMQQQMQQQQQ. Residues 292–304 show a composition bias toward low complexity; sequence QQQMQQQMQQQQQ.

The protein belongs to the PrsA family.

Its subcellular location is the cell membrane. The enzyme catalyses [protein]-peptidylproline (omega=180) = [protein]-peptidylproline (omega=0). Plays a major role in protein secretion by helping the post-translocational extracellular folding of several secreted proteins. The polypeptide is Foldase protein PrsA (Exiguobacterium sibiricum (strain DSM 17290 / CCUG 55495 / CIP 109462 / JCM 13490 / 255-15)).